The primary structure comprises 434 residues: Histidinol dehydrogenase (434 aa).

Residues Tyr130, Gln188, and Asn211 each coordinate NAD(+). Substrate contacts are provided by Ser237, Gln259, and His262. Zn(2+) is bound by residues Gln259 and His262. Active-site proton acceptor residues include Glu326 and His327. Positions 327, 360, 414, and 419 each coordinate substrate. Asp360 is a Zn(2+) binding site. Zn(2+) is bound at residue His419.

This sequence belongs to the histidinol dehydrogenase family. As to quaternary structure, homodimer. Requires Zn(2+) as cofactor.

It carries out the reaction L-histidinol + 2 NAD(+) + H2O = L-histidine + 2 NADH + 3 H(+). It participates in amino-acid biosynthesis; L-histidine biosynthesis; L-histidine from 5-phospho-alpha-D-ribose 1-diphosphate: step 9/9. Functionally, catalyzes the sequential NAD-dependent oxidations of L-histidinol to L-histidinaldehyde and then to L-histidine. The chain is Histidinol dehydrogenase from Shigella sonnei (strain Ss046).